We begin with the raw amino-acid sequence, 543 residues long: Chaperonin GroEL (543 aa).

ATP contacts are provided by residues 29-32 (TLGP), 86-90 (DGTTT), G413, 476-478 (NAA), and D492.

This sequence belongs to the chaperonin (HSP60) family. Forms a cylinder of 14 subunits composed of two heptameric rings stacked back-to-back. Interacts with the co-chaperonin GroES.

It localises to the cytoplasm. The enzyme catalyses ATP + H2O + a folded polypeptide = ADP + phosphate + an unfolded polypeptide.. Its function is as follows. Together with its co-chaperonin GroES, plays an essential role in assisting protein folding. The GroEL-GroES system forms a nano-cage that allows encapsulation of the non-native substrate proteins and provides a physical environment optimized to promote and accelerate protein folding. The sequence is that of Chaperonin GroEL from Streptococcus pyogenes serotype M3 (strain SSI-1).